The following is a 572-amino-acid chain: MQGPLYIGFDLSTQQLKALVVNSDLKVVYVSKFDFDADSRGFPIKKGVITNEAEHEVYAPVALWLQALDGVLEGLKKQGLDFARVKGISGAGQQHGSVYWGQDAERLLKELDSGKSLEDQLSGAFSHPYSPNWQDSSTQKECDEFDAFLGGADKLANATGSKAHHRFTGPQILRFQRKYPEVYKKTSRISLVSSFLASLFLGHIAPLDTSDVCGMNLWNIKQGAYDEKLLQLCAGPSGVEDLKRKLGAVPEDGGINLGQIDRYYIERYGFSSDCTIIPATGDNPATILALPLRPSDAMVSLGTSTTFLMSTPNYMPDPATHFFNHPTTAGLYMFMLCYKNGGLAREHIRDAINDKLGMAGDKDPWANFDKITLETAPMGQKKDSDPMKMGLFFPRPEIVPNLRAGQWRFDYNPADGSLHETNGGWNKPADEARAIVESQFLSLRLRSRGLTASPGQGMPAQPRRVYLVGGGSKNKAIAKVAGEILGGSDGVYKLEIGDNACALGAAYKAVWALERKDGQTFEDLIGQRWREEDFIEKIADGYQKGVFEKYGAALEGFEKMELQVLKQEGETR.

Residues His95, Arg166, Asp282, and Asn283 each coordinate substrate. Residues Trp365, 470–471, and Asn474 each bind ATP; that span reads GG.

The protein belongs to the FGGY kinase family.

Its subcellular location is the cytoplasm. The enzyme catalyses D-xylulose + ATP = D-xylulose 5-phosphate + ADP + H(+). Its function is as follows. Highly specific D-xylulose kinase which participates in the catabolism of xylose. Xylose is a major component of hemicelluloses such as xylan. Most fungi utilize D-xylose via three enzymatic reactions, xylose reductase (XR), xylitol dehydrogenase (XDH), and xylulokinase, to form xylulose 5-phosphate, which enters pentose phosphate pathway. The sequence is that of Probable D-xylulose kinase A (xkiA) from Aspergillus oryzae (strain ATCC 42149 / RIB 40) (Yellow koji mold).